The following is a 166-amino-acid chain: Calmodulin-like protein 5 (166 aa).

EF-hand domains are found at residues E11–T46, P47–R82, A96–K131, and L132–Q166. Ca(2+)-binding residues include D24, D26, D28, C30, E35, D60, D62, N64, T66, E71, D109, D111, D113, and E120. K131 is subject to N6,N6,N6-trimethyllysine. Residues D145, D147, D149, Q151, and E156 each contribute to the Ca(2+) site.

This sequence belongs to the calmodulin family.

Its function is as follows. Potential calcium sensor. The protein is Calmodulin-like protein 5 (CML5) of Oryza sativa subsp. japonica (Rice).